A 137-amino-acid polypeptide reads, in one-letter code: Large ribosomal subunit protein uL16 (137 aa).

It belongs to the universal ribosomal protein uL16 family. Part of the 50S ribosomal subunit.

In terms of biological role, binds 23S rRNA and is also seen to make contacts with the A and possibly P site tRNAs. In Pseudomonas syringae pv. tomato (strain ATCC BAA-871 / DC3000), this protein is Large ribosomal subunit protein uL16.